A 243-amino-acid polypeptide reads, in one-letter code: Ubiquinone/menaquinone biosynthesis C-methyltransferase UbiE (243 aa).

Residues T69, D90, and D116–A117 each bind S-adenosyl-L-methionine.

This sequence belongs to the class I-like SAM-binding methyltransferase superfamily. MenG/UbiE family.

It carries out the reaction a 2-demethylmenaquinol + S-adenosyl-L-methionine = a menaquinol + S-adenosyl-L-homocysteine + H(+). It catalyses the reaction a 2-methoxy-6-(all-trans-polyprenyl)benzene-1,4-diol + S-adenosyl-L-methionine = a 5-methoxy-2-methyl-3-(all-trans-polyprenyl)benzene-1,4-diol + S-adenosyl-L-homocysteine + H(+). The protein operates within quinol/quinone metabolism; menaquinone biosynthesis; menaquinol from 1,4-dihydroxy-2-naphthoate: step 2/2. Its pathway is cofactor biosynthesis; ubiquinone biosynthesis. In terms of biological role, methyltransferase required for the conversion of demethylmenaquinol (DMKH2) to menaquinol (MKH2) and the conversion of 2-polyprenyl-6-methoxy-1,4-benzoquinol (DDMQH2) to 2-polyprenyl-3-methyl-6-methoxy-1,4-benzoquinol (DMQH2). This Paraburkholderia xenovorans (strain LB400) protein is Ubiquinone/menaquinone biosynthesis C-methyltransferase UbiE.